Reading from the N-terminus, the 303-residue chain is NAD kinase (303 aa).

Asp85 acts as the Proton acceptor in catalysis. NAD(+)-binding positions include 85–86, Arg90, 159–160, Lys187, Asp189, Ala224, and Gln259; these read DG and ND.

The protein belongs to the NAD kinase family. A divalent metal cation serves as cofactor.

It is found in the cytoplasm. It catalyses the reaction NAD(+) + ATP = ADP + NADP(+) + H(+). In terms of biological role, involved in the regulation of the intracellular balance of NAD and NADP, and is a key enzyme in the biosynthesis of NADP. Catalyzes specifically the phosphorylation on 2'-hydroxyl of the adenosine moiety of NAD to yield NADP. This chain is NAD kinase, found in Bdellovibrio bacteriovorus (strain ATCC 15356 / DSM 50701 / NCIMB 9529 / HD100).